Consider the following 179-residue polypeptide: Small ribosomal subunit protein uS5 (179 aa).

In terms of domain architecture, S5 DRBM spans 13-76; the sequence is LDERVVLINR…EAAKRNLIRV (64 aa). The segment at 160-179 is disordered; it reads DMTPQELNARRMRRETTEAA.

It belongs to the universal ribosomal protein uS5 family. In terms of assembly, part of the 30S ribosomal subunit. Contacts proteins S4 and S8.

Functionally, with S4 and S12 plays an important role in translational accuracy. Its function is as follows. Located at the back of the 30S subunit body where it stabilizes the conformation of the head with respect to the body. This is Small ribosomal subunit protein uS5 from Chloroflexus aggregans (strain MD-66 / DSM 9485).